The primary structure comprises 237 residues: Ribonuclease PH (237 aa).

Residues arginine 86 and 124 to 126 (GTR) contribute to the phosphate site.

The protein belongs to the RNase PH family. In terms of assembly, homohexameric ring arranged as a trimer of dimers.

The enzyme catalyses tRNA(n+1) + phosphate = tRNA(n) + a ribonucleoside 5'-diphosphate. Its function is as follows. Phosphorolytic 3'-5' exoribonuclease that plays an important role in tRNA 3'-end maturation. Removes nucleotide residues following the 3'-CCA terminus of tRNAs; can also add nucleotides to the ends of RNA molecules by using nucleoside diphosphates as substrates, but this may not be physiologically important. Probably plays a role in initiation of 16S rRNA degradation (leading to ribosome degradation) during starvation. The sequence is that of Ribonuclease PH from Cereibacter sphaeroides (strain KD131 / KCTC 12085) (Rhodobacter sphaeroides).